Consider the following 369-residue polypeptide: MRVILSGGGTGGHIYPALALAEVIKQHEPDAEFLYVGSERGVEANIVPKTGMAFKQLAVQGFSRSLSLHNIKTVQLFLKAVKVSKKIIKEFKPDVVIGTGGYVAGAVVYAAQRMNIPTVIHEQNSVAGVTNKFLARGATKIGVAFEVAKQQFPSEKVVLVGNPRAQQVAQLKSTFSWQTIGLRDDKATVLIFGGSQGAPAINLAVIDAIPEFNERSYQVVIVTGPKRYDNVLDLLRERNIEAADNIRILPYIDNMPNVLKQTDAIVSRAGATSIAEITALGIPSILIPSLHVTGDHQTKNAQSLVDVGAAINITESDLNGQSLIAAVDTLLLDENVSDKMAAQATKVGMPDAGERLYQLILQAMANKKD.

UDP-N-acetyl-alpha-D-glucosamine is bound by residues 10-12 (TGG), N124, S195, I252, and Q297.

The protein belongs to the glycosyltransferase 28 family. MurG subfamily.

The protein localises to the cell membrane. It catalyses the reaction Mur2Ac(oyl-L-Ala-gamma-D-Glu-L-Lys-D-Ala-D-Ala)-di-trans,octa-cis-undecaprenyl diphosphate + UDP-N-acetyl-alpha-D-glucosamine = beta-D-GlcNAc-(1-&gt;4)-Mur2Ac(oyl-L-Ala-gamma-D-Glu-L-Lys-D-Ala-D-Ala)-di-trans,octa-cis-undecaprenyl diphosphate + UDP + H(+). The protein operates within cell wall biogenesis; peptidoglycan biosynthesis. In terms of biological role, cell wall formation. Catalyzes the transfer of a GlcNAc subunit on undecaprenyl-pyrophosphoryl-MurNAc-pentapeptide (lipid intermediate I) to form undecaprenyl-pyrophosphoryl-MurNAc-(pentapeptide)GlcNAc (lipid intermediate II). The sequence is that of UDP-N-acetylglucosamine--N-acetylmuramyl-(pentapeptide) pyrophosphoryl-undecaprenol N-acetylglucosamine transferase from Leuconostoc citreum (strain KM20).